A 926-amino-acid chain; its full sequence is Staphylococcal nuclease domain-containing protein 1 (926 aa).

Over residues 1–17 (MATAANTATAAGAAKDA) the composition is skewed to low complexity. The tract at residues 1-24 (MATAANTATAAGAAKDAPPAPTKS) is disordered. TNase-like domains follow at residues 23–167 (KSLS…KWSP), 195–333 (NPVK…QWQD), 346–505 (KDFS…LHAK), and 535–674 (LRTE…IWTN). In terms of domain architecture, Tudor spans 749–807 (TPKRGDLVAAQFTLDNQWYRAKVERVQGSNATVLYIDYGNKETLPTNRLAALPPAFSSE). The involved in dimethylarginine binding stretch occupies residues 760–788 (FTLDNQWYRAKVERVQGSNATVLYIDYGN).

As to quaternary structure, associates with the RNA-induced silencing complex (RISC). Interacts with the RISC components AGO2, Fmr1 and vig. Interacts with piwi. Expressed in adult ovaries and testis (at protein level).

The protein resides in the cytoplasm. It is found in the nucleus. It carries out the reaction Endonucleolytic cleavage to nucleoside 3'-phosphates and 3'-phosphooligonucleotide end-products.. Functionally, endonuclease which shows activity towards both DNA and RNA substrates. Has a role in translation regulation throught its association with the with the RNA-induced silencing complex (RISC). Plays a role in spermatogenesis probably by negatively regulating piwi expression in the germline. Together with piwi, might be involved in transposon repression in the germline. The sequence is that of Staphylococcal nuclease domain-containing protein 1 from Drosophila melanogaster (Fruit fly).